The chain runs to 67 residues: MAAQEQQQPQSRETETEVDVPEAPPAAPEAQASEATQGVDDLLDEIDGVLESNAEEFVRAFVQKGGQ.

Over residues 1–11 (MAAQEQQQPQS) the composition is skewed to polar residues. The tract at residues 1-38 (MAAQEQQQPQSRETETEVDVPEAPPAAPEAQASEATQG) is disordered. The ARC ATPase binding stretch occupies residues 25-61 (PAAPEAQASEATQGVDDLLDEIDGVLESNAEEFVRAF). The span at 28-37 (PEAQASEATQ) shows a compositional bias: low complexity. Residues 29-49 (EAQASEATQGVDDLLDEIDGV) are a coiled coil. Gln-67 is subject to Deamidated glutamine. Gln-67 participates in a covalent cross-link: Isoglutamyl lysine isopeptide (Gln-Lys) (interchain with K-? in acceptor proteins).

This sequence belongs to the prokaryotic ubiquitin-like protein family. Strongly interacts with the proteasome-associated ATPase ARC through a hydrophobic interface; the interacting region of Pup lies in its C-terminal half. There is one Pup binding site per ARC hexamer ring. In terms of processing, is modified by deamidation of its C-terminal glutamine to glutamate by the deamidase Dop, a prerequisite to the subsequent pupylation process.

The protein operates within protein degradation; proteasomal Pup-dependent pathway. Its function is as follows. Protein modifier that is covalently attached to lysine residues of substrate proteins, thereby targeting them for proteasomal degradation. The tagging system is termed pupylation. The sequence is that of Prokaryotic ubiquitin-like protein Pup (pup) from Paenarthrobacter aurescens (strain TC1).